The following is a 457-amino-acid chain: UPF0210 protein Sfum_2948 (457 aa).

Belongs to the UPF0210 family. As to quaternary structure, homodimer.

This chain is UPF0210 protein Sfum_2948, found in Syntrophobacter fumaroxidans (strain DSM 10017 / MPOB).